A 295-amino-acid polypeptide reads, in one-letter code: UTP--glucose-1-phosphate uridylyltransferase (295 aa).

This sequence belongs to the UDPGP type 2 family.

It carries out the reaction alpha-D-glucose 1-phosphate + UTP + H(+) = UDP-alpha-D-glucose + diphosphate. In terms of biological role, may play a role in stationary phase survival. This is UTP--glucose-1-phosphate uridylyltransferase (galU) from Haemophilus influenzae (strain ATCC 51907 / DSM 11121 / KW20 / Rd).